A 121-amino-acid chain; its full sequence is Group 1 truncated hemoglobin (121 aa).

M1 is subject to N-acetylmethionine. Position 73 (H73) interacts with heme.

Belongs to the truncated hemoglobin family. Group I subfamily. Monomer. Heme is required as a cofactor.

The protein is Group 1 truncated hemoglobin of Tetrahymena pyriformis.